A 225-amino-acid polypeptide reads, in one-letter code: MKHVLKNDWGPLLAPEFEKEYYRELDVFLKEEYSTHVVYPKIEDIFNALEYTSYENTKVVILGQDPYHGPNQAHGLSFSVQPGVKTPPSLLNMYKELRDEYGYDIPNNGYLVKWAEQGVLLLNTVLTVRQGEANSHKGKGWEHFTDRVIELLNEREKPVIFILWGRHAQAKKKLITNPNHQIIESVHPSPLSARRGFFGSKPYSKVNTILANMGEGEIDWEIPNL.

The active-site Proton acceptor is the Asp65.

It belongs to the uracil-DNA glycosylase (UDG) superfamily. UNG family.

Its subcellular location is the cytoplasm. The catalysed reaction is Hydrolyzes single-stranded DNA or mismatched double-stranded DNA and polynucleotides, releasing free uracil.. Its function is as follows. Excises uracil residues from the DNA which can arise as a result of misincorporation of dUMP residues by DNA polymerase or due to deamination of cytosine. The protein is Uracil-DNA glycosylase of Bacillus anthracis (strain A0248).